A 390-amino-acid polypeptide reads, in one-letter code: Putative gustatory receptor 59d (390 aa).

Over 1 to 38 the chain is Cytoplasmic; sequence MADLLKLCLRIAYAYGRLTGVINFKIDLKTGQALVTRG. The chain crosses the membrane as a helical span at residues 39-59; sequence ATLISVSTHLLIFALLLYQTM. The Extracellular segment spans residues 60–75; the sequence is RKSVVNVMWKYANSLH. A helical membrane pass occupies residues 76–96; it reads EYVFLVIAGFRVVCVFLELVS. At 97–128 the chain is on the cytoplasmic side; it reads RWSQRRTFVRLFNSFRRLYQRNPDIIQYCRRS. Residues 129–149 form a helical membrane-spanning segment; sequence IVSKFFCVTMTETLHIIVTLA. Residues 150-156 are Extracellular-facing; sequence MMRNRLS. A helical membrane pass occupies residues 157 to 177; that stretch reads IALALRIWAVLSLTAIINVII. Residues 178–252 are Cytoplasmic-facing; the sequence is TQYYVATACV…NLSTAYEGEV (75 aa). Residues 253–273 traverse the membrane as a helical segment; the sequence is VCLVITYYLNMLGTSYLLFSI. Over 274–283 the chain is Extracellular; the sequence is SKYGNFGNNL. Residues 284-304 form a helical membrane-spanning segment; that stretch reads LVIITLCGIVYFVFYVVDCWI. Residues 305–366 are Cytoplasmic-facing; sequence NAFNVFYLLD…MYGLFEFGRG (62 aa). Residues 367 to 383 form a helical membrane-spanning segment; that stretch reads TSFAVFNSLLTHSLLLI. The Extracellular segment spans residues 384–390; it reads QYDVQNF.

The protein belongs to the insect chemoreceptor superfamily. Gustatory receptor (GR) family. Gr22e subfamily. Expressed in the adult labellar chemosensory neurons. In larvae, is expressed in neurons of the terminal external chemosensory organ as well as in the dorsal pharyngeal sense organ.

The protein resides in the cell membrane. In terms of biological role, probable gustatory receptor which mediates acceptance or avoidance behavior, depending on its substrates. The protein is Putative gustatory receptor 59d (Gr59d) of Drosophila melanogaster (Fruit fly).